The primary structure comprises 469 residues: Protein RUFY3 (469 aa).

Phosphothreonine is present on residues T5 and T12. Residues Y27, S34, and S49 each carry the phosphoserine modification. Residue T51 is modified to Phosphothreonine. D53 carries the post-translational modification Phosphoserine. Positions D95–E227 constitute an RUN domain. Coiled coils occupy residues N271–E362 and K422–K463. Residues S321 to A337 are compositionally biased toward basic and acidic residues. The interval S321 to L342 is disordered.

As to quaternary structure, interacts with PAK1. Interacts (via C-terminus) with Ras-related Rab-5 proteins. Interacts (via C-terminus) with Ras-related Rap-2 proteins. Interacts with PIK3CA and PIK3R1. Interacts (via N-terminus) with FSCN1; this interaction induces neuron axon development. Interacts with DBN1. Interacts (via the second coiled coil) with GTP-, but not GDP-bound ARL8A and ARL8B. Interacts with dynactin/DCTN1 and the dynein intermediate chain DYNC1I1/2. Directly interacts with DYNC1LI1. In terms of processing, phosphorylated by PAK1. Isoform 1 is partially phosphorylated. In terms of tissue distribution, expressed in brain (at protein level).

The protein localises to the cytoplasm. It is found in the endomembrane system. Its subcellular location is the cell projection. It localises to the invadopodium. The protein resides in the growth cone. The protein localises to the perikaryon. It is found in the filopodium. Its subcellular location is the lamellipodium. It localises to the lysosome. Functionally, ARL8 effector that promotes the coupling of endolysosomes to dynein-dynactin for retrograde transport along microtubules. Acts by binding both GTP-bound ARL8 and dynein-dynactin. In nonneuronal cells, promotes concentration of endolysosomes in the juxtanuclear area. In hippocampal neurons, drives retrograde transport of endolysosomes from the axon to the soma. Plays a role in the generation of neuronal polarity formation and axon growth. Implicated in the formation of a single axon by developing neurons. May inhibit the formation of additional axons by inhibition of PI3K in minor neuronal processes. Plays a role in the formation of F-actin-enriched protrusive structures at the cell periphery. Plays a role in cytoskeletal organization by regulating the subcellular localization of FSCN1 and DBN1 at axonal growth cones. This is Protein RUFY3 from Mus musculus (Mouse).